The sequence spans 300 residues: Protoheme IX farnesyltransferase (300 aa).

The next 8 helical transmembrane spans lie at valine 24–valine 44, tryptophan 46–isoleucine 66, proline 94–phenylalanine 114, leucine 118–leucine 138, isoleucine 146–glycine 166, alanine 172–leucine 192, valine 224–leucine 244, and isoleucine 278–leucine 298.

It belongs to the UbiA prenyltransferase family. Protoheme IX farnesyltransferase subfamily.

It is found in the cell inner membrane. It catalyses the reaction heme b + (2E,6E)-farnesyl diphosphate + H2O = Fe(II)-heme o + diphosphate. The protein operates within porphyrin-containing compound metabolism; heme O biosynthesis; heme O from protoheme: step 1/1. Its function is as follows. Converts heme B (protoheme IX) to heme O by substitution of the vinyl group on carbon 2 of heme B porphyrin ring with a hydroxyethyl farnesyl side group. The protein is Protoheme IX farnesyltransferase of Burkholderia ambifaria (strain MC40-6).